The following is a 102-amino-acid chain: Small ribosomal subunit protein uS10 (102 aa).

Belongs to the universal ribosomal protein uS10 family. As to quaternary structure, part of the 30S ribosomal subunit.

Its function is as follows. Involved in the binding of tRNA to the ribosomes. The chain is Small ribosomal subunit protein uS10 from Mesoplasma florum (strain ATCC 33453 / NBRC 100688 / NCTC 11704 / L1) (Acholeplasma florum).